Reading from the N-terminus, the 238-residue chain is Flagellar L-ring protein (238 aa).

The first 16 residues, 1–16, serve as a signal peptide directing secretion; it reads MNKAILAVAMVLLLAG. Cys17 carries the N-palmitoyl cysteine lipid modification. Residue Cys17 is the site of S-diacylglycerol cysteine attachment.

This sequence belongs to the FlgH family. As to quaternary structure, the basal body constitutes a major portion of the flagellar organelle and consists of four rings (L,P,S, and M) mounted on a central rod.

It is found in the cell outer membrane. Its subcellular location is the bacterial flagellum basal body. Functionally, assembles around the rod to form the L-ring and probably protects the motor/basal body from shearing forces during rotation. In Brucella abortus (strain 2308), this protein is Flagellar L-ring protein.